The following is a 207-amino-acid chain: tRNA (pseudouridine(54)-N(1))-methyltransferase (207 aa).

L137 provides a ligand contact to S-adenosyl-L-methionine.

Belongs to the methyltransferase superfamily. TrmY family. As to quaternary structure, homodimer.

It is found in the cytoplasm. It carries out the reaction pseudouridine(54) in tRNA + S-adenosyl-L-methionine = N(1)-methylpseudouridine(54) in tRNA + S-adenosyl-L-homocysteine + H(+). Functionally, specifically catalyzes the N1-methylation of pseudouridine at position 54 (Psi54) in tRNAs. In Halorubrum lacusprofundi (strain ATCC 49239 / DSM 5036 / JCM 8891 / ACAM 34), this protein is tRNA (pseudouridine(54)-N(1))-methyltransferase.